Consider the following 181-residue polypeptide: Shikimate kinase 2 (181 aa).

Position 12 to 17 (12 to 17) interacts with ATP; sequence GCGKTT. Mg(2+)-binding residues include T16 and D32. Residues D34, R58, and G79 each contribute to the substrate site. The interval 112-126 is LID domain; sequence EAEPEADLRPTLTGK. Residue R120 participates in ATP binding. A substrate-binding site is contributed by R139.

It belongs to the shikimate kinase family. AroL subfamily. As to quaternary structure, monomer. The cofactor is Mg(2+).

The protein localises to the cytoplasm. It carries out the reaction shikimate + ATP = 3-phosphoshikimate + ADP + H(+). It functions in the pathway metabolic intermediate biosynthesis; chorismate biosynthesis; chorismate from D-erythrose 4-phosphate and phosphoenolpyruvate: step 5/7. In terms of biological role, catalyzes the specific phosphorylation of the 3-hydroxyl group of shikimic acid using ATP as a cosubstrate. In Salmonella enteritidis PT4 (strain P125109), this protein is Shikimate kinase 2.